The sequence spans 506 residues: Maturase K (506 aa).

The protein belongs to the intron maturase 2 family. MatK subfamily.

It is found in the plastid. Its subcellular location is the chloroplast. Its function is as follows. Usually encoded in the trnK tRNA gene intron. Probably assists in splicing its own and other chloroplast group II introns. This is Maturase K from Mentzelia lindleyi (Blazing star).